The sequence spans 225 residues: Small ribosomal subunit protein uS5 (225 aa).

An S5 DRBM domain is found at 57 to 120; the sequence is LEEQVLDVKL…AQAKLSLIKV (64 aa).

The protein belongs to the universal ribosomal protein uS5 family. Part of the 30S ribosomal subunit. Contacts protein S4.

In terms of biological role, with S4 and S12 plays an important role in translational accuracy. The polypeptide is Small ribosomal subunit protein uS5 (Methanococcus vannielii (strain ATCC 35089 / DSM 1224 / JCM 13029 / OCM 148 / SB)).